The primary structure comprises 882 residues: Ubiquitin carboxyl-terminal hydrolase 4 (882 aa).

The Rhodanese domain maps to 182–308 (YDSSLLLIDV…WVSKKGACET (127 aa)). Residues 382-399 (KAKSSSTSSVTSSSPAPS) show a composition bias toward low complexity. The disordered stretch occupies residues 382-411 (KAKSSSTSSVTSSSPAPSQLVRPQTSSMPP). A compositionally biased stretch (polar residues) spans 402–411 (VRPQTSSMPP). One can recognise a USP domain in the interval 519–879 (VGLENMGNSC…NAYVLFYHRV (361 aa)). Cys528 acts as the Nucleophile in catalysis. Residue His836 is the Proton acceptor of the active site.

It belongs to the peptidase C19 family.

It is found in the cytoplasm. Its subcellular location is the late endosome membrane. The enzyme catalyses Thiol-dependent hydrolysis of ester, thioester, amide, peptide and isopeptide bonds formed by the C-terminal Gly of ubiquitin (a 76-residue protein attached to proteins as an intracellular targeting signal).. RFU1 is an inhibitor of deubiquitination activity. Ubiquitin thioesterase that acts at the late endosome/prevacuolar compartment to recover ubiquitin from ubiquitinated membrane proteins en route to the vacuole. Also removes ubiquitin from soluble proteins targeted to proteasomes. Is essential to maintain a normal level of free ubiquitin. Required for promoting coordination of DNA replication and avoids DNA overreplication. In Vanderwaltozyma polyspora (strain ATCC 22028 / DSM 70294 / BCRC 21397 / CBS 2163 / NBRC 10782 / NRRL Y-8283 / UCD 57-17) (Kluyveromyces polysporus), this protein is Ubiquitin carboxyl-terminal hydrolase 4 (DOA4).